The following is a 105-amino-acid chain: Iron-sulfur cluster assembly protein CyaY (105 aa).

This sequence belongs to the frataxin family.

Involved in iron-sulfur (Fe-S) cluster assembly. May act as a regulator of Fe-S biogenesis. This is Iron-sulfur cluster assembly protein CyaY from Paraburkholderia phymatum (strain DSM 17167 / CIP 108236 / LMG 21445 / STM815) (Burkholderia phymatum).